The sequence spans 309 residues: Shugoshin (309 aa).

Residues 42 to 77 (NLLLKQQVVQCTKTIEKLRNENVALRQKNQELIDGT) adopt a coiled-coil conformation. 2 disordered regions span residues 165 to 195 (FDNN…KGRR) and 210 to 309 (EEAS…NTFF). Low complexity predominate over residues 167 to 178 (NNSSQSTSSIQN). Over residues 184–193 (PRKKQSVGKG) the composition is skewed to basic residues.

The protein belongs to the shugoshin family. Expressed in gonads.

The protein localises to the nucleus. It localises to the chromosome. It is found in the centromere. In terms of biological role, component of cell cycle checkpoints, which ensures chromosome segregation during meiosis and mitosis. During meiotic prophase, it is involved in the regulation of the synapsis checkpoint, which monitors whether homologous chromosomes have synapsed, and the DNA damage response. Plays a central role in chromosome cohesion during cell division by preventing premature dissociation of cohesin complex after prophase, when most of cohesin complex dissociates from chromosomes arms. The chain is Shugoshin from Caenorhabditis elegans.